We begin with the raw amino-acid sequence, 348 residues long: DNA ligase C1 (348 aa).

Catalysis depends on K32, which acts as the N6-AMP-lysine intermediate.

Belongs to the ATP-dependent DNA ligase family. It depends on a divalent metal cation as a cofactor.

The catalysed reaction is ATP + (deoxyribonucleotide)n-3'-hydroxyl + 5'-phospho-(deoxyribonucleotide)m = (deoxyribonucleotide)n+m + AMP + diphosphate.. Functionally, DNA ligase that seals nicks in double-stranded DNA during DNA replication, DNA recombination and DNA repair. Has weak intrinsic nick joining activities and accumulates DNA-adenylate. Acts as a backup for LigD in the Ku-LigD-dependent NHEJ pathway. The sequence is that of DNA ligase C1 (ligC) from Mycolicibacterium smegmatis (strain ATCC 700084 / mc(2)155) (Mycobacterium smegmatis).